Consider the following 355-residue polypeptide: Probable butyrate kinase (355 aa).

The protein belongs to the acetokinase family.

Its subcellular location is the cytoplasm. The enzyme catalyses butanoate + ATP = butanoyl phosphate + ADP. The protein is Probable butyrate kinase of Listeria innocua serovar 6a (strain ATCC BAA-680 / CLIP 11262).